A 103-amino-acid chain; its full sequence is Large ribosomal subunit protein bL21 (103 aa).

The protein belongs to the bacterial ribosomal protein bL21 family. As to quaternary structure, part of the 50S ribosomal subunit. Contacts protein L20.

This protein binds to 23S rRNA in the presence of protein L20. The sequence is that of Large ribosomal subunit protein bL21 from Tolumonas auensis (strain DSM 9187 / NBRC 110442 / TA 4).